The primary structure comprises 650 residues: Putative F-box protein R757 (650 aa).

Residues 7–53 (FSVMESLPTELAYHVLSFIDFNSVVTYRLCSQESNNFIKSMLVFFPI) enclose the F-box domain.

The chain is Putative F-box protein R757 from Acanthamoeba polyphaga mimivirus (APMV).